The sequence spans 2382 residues: MAPHSTLDSDYSSGSSTPTSASAAGDGFVDGLNGLNNGRAVDPQEPIAIIGMGCRLPGGSHSSSKLWELLKAGRTAQSRFPPSRFNIDGFYHPNSDRPGSLNMEGGYFIEDDIRGFENSFFGINNLEATYMDPQQRKLLEVVFETFENAGFTLDQVSDANIGCYVGNFVTDFITMQLKDSEYTHRYSATGLGTTILANRISHVFNMKGPSFVIDTACSSSLYCLHAAVAALIAGECDSAIVAGANLIQSPEQQLATMKAGVLSKTSTCHTFDSSADGYGRADGIGAILVKRLSDAIRDGDPIRSVIRGTAINSNGKTNGITLPSADGQEAVIRKAYAQAGLGFNETDYIECHGTGTAVGDPIEVEAVSRVFKKPQGAPLLIGSVKSNLGHSEAASGLSSIIKVAMALEKGEIPPTYGVKNINPKIKTDEWNVQIVTETTPWPKNLPHNAGRLFRRAGVNSFGYGGANAHAILEAPQMHVPVGYNRGSLPASLTRSTLFLPFSGSNTAALERRVTDIAAAIDFENVNIADLAYTLGVKRTHLSTRGYILSGQDTLKDDLKPENLRVALQGKTYSKLPLAFVFTGQGAQWPEMGKELMKEFPSFRRTIQRLDAALQMLPHAPTWTLQGAILEPAKTSMINHASRSQPVCTAVQIALVQLLASWGIKPESVIGHSSGEIAAAYTAGYLTPEQSIIIAYYRGHCVTKSTMVGAMMAAGLGAEDANKKISELDLVGKIRVACVNSPESVTISGDTEGIETLRAQFDQAGTFARVLKTDGKAYHSHHMAVIGQEYEDLLTEALDGDDFPTTSNGVRFISSVTDAVVNHAVGPAYWRANLESPVLFANVVERLIKDTASHLVELGPHSALELPIKQTRTKLNISETKVHYGSALSRGKNSITTILNLVGDLFLHGHDISFKGVNYVDSAFNSPKARKNVKTQEKMLLDLPNYTWDYSGTVFNESRVSVEWRNRKYPRHDLLGSQVHGGNGISTNWRNVVKAKDIPWMEGHKLDTTTVFPAAGYLAMAVEAMCQVADVTKEQEPALSLRNVNITKALTLGSEETDAGVELFTTLYPAQLPGGATDAGWYQFNISSYTNGTATTHANGLVKIDSAPAPLEVNLPIVPSTMEPQAPRTWYGKFAKGGLNFQGQFQSLTEIQNPRKKENPHTLAKTELRQGGGSGPSTESEYLIHPITIDALFQAGIIASTSGVVRELRAKVPVHIEEMHLRAPVGGQKELKVNATSEAVGFGTIRVDGELFDDEGRVFLQINRCRQVSYQSGIQQEAGDERHPMLRVVWKPDVTRLGAGDAKEFSQYIEQYAAKSESKVDDATVRLGAALDLLIHKHPRLRILNLDVNLTEFLVDTLRLETDFKKCKTLVSGSYSEDGTLTFEDLTNEGKTSTAAQVFDVVILGSKAQELEAAKELVDENGSIIVNGSPADADKLQTLGFTTLQAPSDTILAQTPQEITAKQQKTLSKQVLIVERNADHVLNSAIAAQAKKITGLEAKRIPLESVTADIIAAHTRVISTIELENPVLSRVTEDEMKHIKTLTDNCTNLVWVTGGRLFQSASPEHAVVYGLSRALMLEQPSLRFFVVDVDHEGTPVERSAKHVVEVLQQALIEADPDYEFVQNAGLLHVSRFVPEETLNRVFREKQGAEKLALPLKDARPFRLGTDMVGQIDSIFFRREEAKDVQLADGHVEVSVKAVGLNTKDLQAINGDGDNTSGSFCTSQYTAVVANVGTGVENLAVGDRVVVMTPGYFATTESVPAWACQKLADNEDFTTLSSVPLQLSTAIYAVNNRAHVQAGESVLVITGSDIAADQAAIRVAQLAGAEVFAVGESTNLPSERVFTKGDKALVAKLLKATEGRGVDVVLNFANDAAPISSIGNVFADCGRLVHVGKSSLAEAIATDSTLFRKSVTVTTFDIANILSLKTVAGQKIRSQLLADSIALYRQGQLNLASSPKVFDVSEVRDAFRALAAKGHSGSVVVSLENEASLVPTLPLKYDTVLSPEKSYLLVGCLGGLGRSMSKWMLARGARKFVFMGRSGTDRAPARRLVEDLELAGAQVTVVRGDVINMEDVELAVNGIDGPIGGVIQAAMGLDEALFTTMPRDYWLTGLKPKIVGSWNLHNAIRGRDSELDFFLMTSSISGSVGTATESNYCSANYFLDVFARHRHSLGLPATSIGLGMISEVGYLHENPEIEAMLLRKGIQAINEDEMLQIIDASLATPTAVPGSYDELARAHVLTGLEPLGLKELRAKGFEGTSPVLGDPRASLLSAALDESTDAASSNAASGMPAEVAEAIATGASVEDAVLKMISKKFSNLVLIPEDKLNLTKPISEVGVDSMLAAEFRAWIFQAFKVDVPYLTLLSAAATLTLLSELITKKMMEAQDA.

Residues 1-25 are disordered; it reads MAPHSTLDSDYSSGSSTPTSASAAG. Residues 44 to 474 enclose the Ketosynthase family 3 (KS3) domain; it reads QEPIAIIGMG…GANAHAILEA (431 aa). Catalysis depends on for beta-ketoacyl synthase activity residues Cys217, His352, and His390. Positions 580 to 891 are malonyl-CoA:ACP transacylase (MAT) domain; the sequence is VFTGQGAQWP…HYGSALSRGK (312 aa). Ser672 (for malonyltransferase activity) is an active-site residue. The interval 971 to 1108 is N-terminal hotdog fold; it reads HDLLGSQVHG…GLVKIDSAPA (138 aa). The tract at residues 971–1274 is dehydratase (DH) domain; sequence HDLLGSQVHG…RQVSYQSGIQ (304 aa). The PKS/mFAS DH domain maps to 971–1275; the sequence is HDLLGSQVHG…QVSYQSGIQQ (305 aa). His1003 (proton acceptor; for dehydratase activity) is an active-site residue. A C-terminal hotdog fold region spans residues 1121-1275; the sequence is MEPQAPRTWY…QVSYQSGIQQ (155 aa). Catalysis depends on Asp1189, which acts as the Proton donor; for dehydratase activity. An enoyl reductase (ER) domain region spans residues 1668–1979; sequence GQIDSIFFRR…AKGHSGSVVV (312 aa). Residues 2004-2180 form a ketoreductase (KR) domain region; that stretch reads SYLLVGCLGG…ATSIGLGMIS (177 aa). Residues 2298–2376 enclose the Carrier domain; it reads SVEDAVLKMI…LLSELITKKM (79 aa). O-(pantetheine 4'-phosphoryl)serine is present on Ser2335.

In terms of biological role, highly reducing polyketide synthase; part of the gene cluster that mediates the biosynthesis of sordarial, a salicylic aldehyde structurally related to the phytotoxin pyriculol. The most interesting aspect of this pathway is formation of an aromatic product from the highly reducing polyketide synthase srdA. SrdA synthesizes a reduced polyketide chain from one molecule of acetyl-CoA and five molecules of malonyl-CoA. The polyketide chain is then reductively released as an aldehyde. The oxidoreductases srdC, srdD and srdE then oxidize one of the hydroxy groups to facilitate the intramolecular aldol condensation, followed by dehydration to yield a salicylic aldehyde. This aldehyde can undergo facile reduction by endogenous reductases to yield the alcohol 1-hydroxy-2-hydroxymethyl-3-pent-1,3-dienylbenzene. The flavin-dependent srdI counteract against the propensity of the aldehydes to be reduced under physiological conditions and is responsible for reoxidizing 1-hydroxy-2-hydroxymethyl-3-pent-1,3-dienylbenzene back to the salicylic aldehyde. This salicylic aldehyde is then selectively epoxidized by the cupin-domain-containing oxidoreductase srdB to yield the epoxide, which can be hydrolyzed stereoselectively by the hydrolase srdG to give the final product sordarial. The polypeptide is Highly reducing polyketide synthase srdA (Neurospora crassa (strain ATCC 24698 / 74-OR23-1A / CBS 708.71 / DSM 1257 / FGSC 987)).